The following is a 149-amino-acid chain: D-aminoacyl-tRNA deacylase (149 aa).

Residues 137–138 carry the Gly-cisPro motif, important for rejection of L-amino acids motif; that stretch reads GP.

This sequence belongs to the DTD family. As to quaternary structure, homodimer.

The protein resides in the cytoplasm. It carries out the reaction glycyl-tRNA(Ala) + H2O = tRNA(Ala) + glycine + H(+). The catalysed reaction is a D-aminoacyl-tRNA + H2O = a tRNA + a D-alpha-amino acid + H(+). In terms of biological role, an aminoacyl-tRNA editing enzyme that deacylates mischarged D-aminoacyl-tRNAs. Also deacylates mischarged glycyl-tRNA(Ala), protecting cells against glycine mischarging by AlaRS. Acts via tRNA-based rather than protein-based catalysis; rejects L-amino acids rather than detecting D-amino acids in the active site. By recycling D-aminoacyl-tRNA to D-amino acids and free tRNA molecules, this enzyme counteracts the toxicity associated with the formation of D-aminoacyl-tRNA entities in vivo and helps enforce protein L-homochirality. The sequence is that of D-aminoacyl-tRNA deacylase from Clostridium botulinum (strain Alaska E43 / Type E3).